Reading from the N-terminus, the 50-residue chain is Acidic phospholipase A2 1 (50 aa).

Ca(2+) contacts are provided by Y27, G29, and G31. Cysteines 28 and 44 form a disulfide. H47 is an active-site residue. D48 contacts Ca(2+).

The protein belongs to the phospholipase A2 family. Group II subfamily. D49 sub-subfamily. Monomer. Ca(2+) serves as cofactor. Expressed by the venom gland.

The protein resides in the secreted. The catalysed reaction is a 1,2-diacyl-sn-glycero-3-phosphocholine + H2O = a 1-acyl-sn-glycero-3-phosphocholine + a fatty acid + H(+). Its function is as follows. Snake venom phospholipase A2 (PLA2) that displays a potent enzymatic activity as measured by indirect hemolysis of red blood cells. Is neither lethal when injected into mice nor does it present anticoagulant activity. Displays a moderate inhibitory activity on the aggregation of platelets induced by low levels of ADP, thrombin and arachidonate. In contrast, strongly inhibits platelet aggregation induced by high doses of collagen. Shows myotoxic activity, increases the plasma creatine-kinase activity and induces edema and myonecrosis of mouse skeletal muscles. PLA2 catalyzes the calcium-dependent hydrolysis of the 2-acyl groups in 3-sn-phosphoglycerides. In Lachesis muta muta (Bushmaster), this protein is Acidic phospholipase A2 1.